Consider the following 475-residue polypeptide: Methyltransferase-like protein 25B (475 aa).

A coiled-coil region spans residues 186–210 (QRLVERAQRLDQELLQTLEKEEKRN). A helical membrane pass occupies residues 406 to 426 (VVAFFSLALLLAPLVETLILL).

This sequence belongs to the METTL25 family.

The protein resides in the membrane. This is Methyltransferase-like protein 25B from Bos taurus (Bovine).